We begin with the raw amino-acid sequence, 228 residues long: DNA-3-methyladenine glycosylase 1 (228 aa).

Asp-170 serves as the catalytic Proton acceptor.

The protein belongs to the alkylbase DNA glycosidase AlkA family.

It carries out the reaction Hydrolysis of alkylated DNA, releasing 3-methyladenine, 3-methylguanine, 7-methylguanine and 7-methyladenine.. Its function is as follows. Hydrolysis of the deoxyribose N-glycosidic bond to excise 3-methyladenine or 7-methyladenine from the damaged DNA polymer formed by alkylation lesions. Can release ethylated and propylated bases from DNA in addition to 3-methyladenine. The polypeptide is DNA-3-methyladenine glycosylase 1 (mag1) (Schizosaccharomyces pombe (strain 972 / ATCC 24843) (Fission yeast)).